A 118-amino-acid polypeptide reads, in one-letter code: UPF0102 protein Nwi_0116 (118 aa).

It belongs to the UPF0102 family.

In Nitrobacter winogradskyi (strain ATCC 25391 / DSM 10237 / CIP 104748 / NCIMB 11846 / Nb-255), this protein is UPF0102 protein Nwi_0116.